Reading from the N-terminus, the 784-residue chain is Cadherin-5 (784 aa).

A signal peptide spans 1–25; the sequence is MQRLMMLLATSGACLGLLAVAAVAA. A propeptide spanning residues 26 to 47 is cleaved from the precursor; the sequence is AGANPAQRDTHSLLPTHRRQKR. Cadherin domains are found at residues 48 to 151, 152 to 258, 259 to 372, 373 to 477, and 478 to 593; these read DWIW…WPVF, THRL…FPFF, TQTK…PPIF, QQPF…DNAP, and EFAK…MAAQ. The Extracellular portion of the chain corresponds to 48 to 599; that stretch reads DWIWNQMHID…MAAQVGVSIQ (552 aa). 2 residues coordinate Ca(2+): Glu-58 and Glu-59. Asn-61 carries an N-linked (GlcNAc...) (complex) asparagine glycan. Residues Asp-109 and Glu-111 each contribute to the Ca(2+) site. Asn-112 is a glycosylation site (N-linked (GlcNAc...) (complex) asparagine). Ca(2+)-binding residues include Asp-143, Val-144, Asn-145, Asp-146, and Asn-147. Asn-157 carries an N-linked (GlcNAc...) asparagine glycan. Residues Asp-177, Asp-179, His-186, and Asp-231 each contribute to the Ca(2+) site. N-linked (GlcNAc...) asparagine glycosylation occurs at Asn-362. Asn-442 carries an N-linked (GlcNAc...) (complex) asparagine glycan. N-linked (GlcNAc...) asparagine glycans are attached at residues Asn-523 and Asn-535. The chain crosses the membrane as a helical span at residues 600–620; that stretch reads AVVAILLCILTITVITLLIFL. A required for interaction with PALS1 region spans residues 621–660; the sequence is RRRLRKQARAHGKSVPEIHEQLVTYDEEGGGEMDTTSYDV. Residues 621–784 lie on the Cytoplasmic side of the membrane; the sequence is RRRLRKQARA…GSDPREELLY (164 aa).

As to quaternary structure, part of a complex composed of AMOTL2, MAGI1 and CDH5, within the complex AMOTL2 acts as a scaffold protein for the interaction of MAGI1 with CDH5. The complex is required for coupling actin fibers to cell junctions in endothelial cells. Within the complex AMOTL2 (via its N-terminus) interacts with CDH5. Interacts (via cadherin 5 domain) with PTPRB. Interacts with TRPC4. Interacts with KRIT1. Interacts with PARD3. Interacts with RTN4 (isoform B). Interacts with PALS1; the interaction promotes PALS1 localization to cell junctions and is required for CDH5-mediated vascular lumen formation and endothelial cell. Interacts with CTNND1/p120-catenin; the interaction controls CADH5 endocytosis. Post-translationally, phosphorylated on tyrosine residues by KDR/VEGFR-2. Dephosphorylated by PTPRB. O-glycosylated. As to expression, expressed in endothelial cells (at protein level). Expressed in the brain.

It localises to the cell junction. Its subcellular location is the adherens junction. The protein localises to the cell membrane. The protein resides in the cytoplasm. Cadherins are calcium-dependent cell adhesion proteins. They preferentially interact with themselves in a homophilic manner in connecting cells; cadherins may thus contribute to the sorting of heterogeneous cell types. This cadherin may play a important role in endothelial cell biology through control of the cohesion and organization of the intercellular junctions. It associates with alpha-catenin forming a link to the cytoskeleton. Plays a role in coupling actin fibers to cell junctions in endothelial cells, via acting as a cell junctional complex anchor for AMOTL2 and MAGI1. Acts in concert with KRIT1 and PALS1 to establish and maintain correct endothelial cell polarity and vascular lumen. These effects are mediated by recruitment and activation of the Par polarity complex and RAP1B. Required for activation of PRKCZ and for the localization of phosphorylated PRKCZ, PARD3, TIAM1 and RAP1B to the cell junction. Associates with CTNND1/p120-catenin to control CADH5 endocytosis. The chain is Cadherin-5 from Homo sapiens (Human).